The chain runs to 284 residues: RNase adapter protein RapZ (284 aa).

8-15 (GRSGSGKS) serves as a coordination point for ATP. 56-59 (DVRN) provides a ligand contact to GTP. The interval 266-284 (RSRGKNVQSRHRTLEKRKQ) is RNA-binding.

Belongs to the RapZ-like family. RapZ subfamily. Homotrimer.

Its function is as follows. Modulates the synthesis of GlmS, by affecting the processing and stability of the regulatory small RNA GlmZ. When glucosamine-6-phosphate (GlcN6P) concentrations are high in the cell, RapZ binds GlmZ and targets it to cleavage by RNase E. Consequently, GlmZ is inactivated and unable to activate GlmS synthesis. Under low GlcN6P concentrations, RapZ is sequestered and inactivated by an other regulatory small RNA, GlmY, preventing GlmZ degradation and leading to synthesis of GlmS. This chain is RNase adapter protein RapZ, found in Serratia proteamaculans (strain 568).